Here is a 114-residue protein sequence, read N- to C-terminus: Small ribosomal subunit protein bS6 (114 aa).

Belongs to the bacterial ribosomal protein bS6 family.

Its function is as follows. Binds together with bS18 to 16S ribosomal RNA. The protein is Small ribosomal subunit protein bS6 of Bacteroides thetaiotaomicron (strain ATCC 29148 / DSM 2079 / JCM 5827 / CCUG 10774 / NCTC 10582 / VPI-5482 / E50).